The chain runs to 525 residues: GMP synthase [glutamine-hydrolyzing] (525 aa).

In terms of domain architecture, Glutamine amidotransferase type-1 spans 9–207; sequence RILILDFGSQ…VLDVCQCEAL (199 aa). The active-site Nucleophile is the Cys-86. Active-site residues include His-181 and Glu-183. The GMPS ATP-PPase domain maps to 208–400; sequence WTPASIIEDT…LGLPYDMLNR (193 aa). Residue 235–241 participates in ATP binding; it reads SGGVDSS.

As to quaternary structure, homodimer.

The catalysed reaction is XMP + L-glutamine + ATP + H2O = GMP + L-glutamate + AMP + diphosphate + 2 H(+). It functions in the pathway purine metabolism; GMP biosynthesis; GMP from XMP (L-Gln route): step 1/1. In terms of biological role, catalyzes the synthesis of GMP from XMP. The chain is GMP synthase [glutamine-hydrolyzing] from Photorhabdus laumondii subsp. laumondii (strain DSM 15139 / CIP 105565 / TT01) (Photorhabdus luminescens subsp. laumondii).